We begin with the raw amino-acid sequence, 114 residues long: Aspartate 1-decarboxylase (114 aa).

The active-site Schiff-base intermediate with substrate; via pyruvic acid is Ser25. Ser25 is modified (pyruvic acid (Ser)). Thr57 is a binding site for substrate. The active-site Proton donor is the Tyr58. Substrate is bound at residue 73-75; sequence GAA.

It belongs to the PanD family. Heterooctamer of four alpha and four beta subunits. It depends on pyruvate as a cofactor. Post-translationally, is synthesized initially as an inactive proenzyme, which is activated by self-cleavage at a specific serine bond to produce a beta-subunit with a hydroxyl group at its C-terminus and an alpha-subunit with a pyruvoyl group at its N-terminus.

Its subcellular location is the cytoplasm. It catalyses the reaction L-aspartate + H(+) = beta-alanine + CO2. Its pathway is cofactor biosynthesis; (R)-pantothenate biosynthesis; beta-alanine from L-aspartate: step 1/1. Its function is as follows. Catalyzes the pyruvoyl-dependent decarboxylation of aspartate to produce beta-alanine. The polypeptide is Aspartate 1-decarboxylase (Thermotoga sp. (strain RQ2)).